A 151-amino-acid chain; its full sequence is Large ribosomal subunit protein uL15 (151 aa).

Residues methionine 1–leucine 60 are disordered.

It belongs to the universal ribosomal protein uL15 family. In terms of assembly, part of the 50S ribosomal subunit.

Binds to the 23S rRNA. The protein is Large ribosomal subunit protein uL15 of Streptomyces griseus subsp. griseus (strain JCM 4626 / CBS 651.72 / NBRC 13350 / KCC S-0626 / ISP 5235).